Here is a 107-residue protein sequence, read N- to C-terminus: Nucleoid-associated protein A1I_00660 (107 aa).

The disordered stretch occupies residues 81 to 107; it reads KCDSDSQNSMSGALSGMSLPPGFKMPF.

The protein belongs to the YbaB/EbfC family. As to quaternary structure, homodimer.

It localises to the cytoplasm. The protein localises to the nucleoid. In terms of biological role, binds to DNA and alters its conformation. May be involved in regulation of gene expression, nucleoid organization and DNA protection. The chain is Nucleoid-associated protein A1I_00660 from Rickettsia bellii (strain OSU 85-389).